Reading from the N-terminus, the 388-residue chain is MRYLTSGESHGPQLTVIVEGIPANLEIKVEDINKEMFKRQGGYGRGRRMQIEKDTVEIVSGVRNGYTLGSPITMVVTNDDFTHWRKIMGAAPISEEERENMKRTITKPRPGHADLVGGMKYNHRDLRNVLERSSARETAARVAVGALCKVLLQQLDIDIYSRVVEIGGIKDKDFYDSETFKANLDRNDVRVIDDSIAQAMRDKIDEAKNEGDSIGGVVQVVVENMPVGVGSYVHYDRKLDGKIAQGVVSINAFKGVSFGEGFKAAEKPGSEIQDEILYNSEIGYYRGSNHLGGLEGGMSNGMPIIVNGVMKPIPTLYKPLNSVDINTKEDFKATIERSDSCAVPAASIVCEHVVAFEIAKALLEEFQSNHIEQLQQQIADRRQLNVEF.

Residues Arg-39 and Arg-45 each coordinate NADP(+). FMN contacts are provided by residues 132–134 (RSS), 251–252 (NA), Gly-296, 311–315 (KPIPT), and Arg-337.

This sequence belongs to the chorismate synthase family. Homotetramer. FMNH2 is required as a cofactor.

The enzyme catalyses 5-O-(1-carboxyvinyl)-3-phosphoshikimate = chorismate + phosphate. It functions in the pathway metabolic intermediate biosynthesis; chorismate biosynthesis; chorismate from D-erythrose 4-phosphate and phosphoenolpyruvate: step 7/7. Its function is as follows. Catalyzes the anti-1,4-elimination of the C-3 phosphate and the C-6 proR hydrogen from 5-enolpyruvylshikimate-3-phosphate (EPSP) to yield chorismate, which is the branch point compound that serves as the starting substrate for the three terminal pathways of aromatic amino acid biosynthesis. This reaction introduces a second double bond into the aromatic ring system. The sequence is that of Chorismate synthase from Staphylococcus aureus (strain Mu50 / ATCC 700699).